A 308-amino-acid chain; its full sequence is Flavonol synthase 3 (308 aa).

The region spanning 167–267 (TIEYLMKINY…RISWPVFVES (101 aa)) is the Fe2OG dioxygenase domain. 175–177 (NYY) provides a ligand contact to 2-oxoglutarate. The Fe cation site is built by His-192, Asp-194, and His-248. 258–260 (RIS) serves as a coordination point for 2-oxoglutarate.

It belongs to the iron/ascorbate-dependent oxidoreductase family. Requires Fe(2+) as cofactor. In terms of tissue distribution, widely expressed at low levels.

The catalysed reaction is a (2R,3R)-dihydroflavonol + 2-oxoglutarate + O2 = a flavonol + succinate + CO2 + H2O. It participates in secondary metabolite biosynthesis; flavonoid biosynthesis. In terms of biological role, catalyzes the formation of flavonols from dihydroflavonols. Possesses low activity in vitro towards dihydrokaempferol and dihydroquercetin producing kaempferol and quercitin, respectively. This chain is Flavonol synthase 3, found in Arabidopsis thaliana (Mouse-ear cress).